We begin with the raw amino-acid sequence, 72 residues long: DNA-directed RNA polymerase subunit Rpo10 (72 aa).

Residues Cys-7, Cys-10, Cys-53, and Cys-54 each contribute to the Zn(2+) site.

It belongs to the archaeal Rpo10/eukaryotic RPB10 RNA polymerase subunit family. In terms of assembly, part of the RNA polymerase complex. It depends on Zn(2+) as a cofactor.

It is found in the cytoplasm. It catalyses the reaction RNA(n) + a ribonucleoside 5'-triphosphate = RNA(n+1) + diphosphate. In terms of biological role, DNA-dependent RNA polymerase (RNAP) catalyzes the transcription of DNA into RNA using the four ribonucleoside triphosphates as substrates. The sequence is that of DNA-directed RNA polymerase subunit Rpo10 from Thermoplasma acidophilum (strain ATCC 25905 / DSM 1728 / JCM 9062 / NBRC 15155 / AMRC-C165).